The following is a 61-amino-acid chain: [Thr6]-bradykinyl-Val,Asp (61 aa).

An N-terminal signal peptide occupies residues 1–22; that stretch reads MSFLKKSLFLVLFLGLVSFSIC. Residues 23 to 50 constitute a propeptide that is removed on maturation; the sequence is EEEKRETEEEENEDEMDKESEEKRESPE. Residues 24-61 form a disordered region; sequence EEKRETEEEENEDEMDKESEEKRESPERPPGFTPFRVD. The segment covering 30–41 has biased composition (acidic residues); sequence EEEENEDEMDKE. Residue Pro-53 is modified to 4-hydroxyproline; in form [Hyp3,Thr6]-bradykinyl-Val,Asp and [Hyp3,Thr6]-bradykinin.

The protein belongs to the frog skin active peptide (FSAP) family. Bradykinin-related peptide subfamily. In terms of tissue distribution, expressed by the skin glands.

The protein localises to the secreted. In terms of biological role, induces relaxation of rat smooth muscle from tail artery (EC(50)=16.8 nM) and contraction of that from ileum (EC(50)=205 nM), urinary bladder (EC(50)=895 nM) and uterus (EC(50)=60.3 nM). Binds to both bradykinin receptor B1 (BDKRB1) and B2 (BDKRB2). [Hyp3,Thr6]-bradykinin: Induces relaxation of rat smooth muscle from tail artery (EC(50)=56.7 nM) and contraction of that from ileum (EC(50)=588 nM), urinary bladder (EC(50)=4.6 uM) and uterus (EC(50)=3.9 nM). Binds to both bradykinin receptor B1 (BDKRB1) and B2 (BDKRB2). In arterial smooth muscle, the effect via BDKRB1 is stronger, in uterus, ileum and urinary bladder that via BDKRB2. Its function is as follows. Induces relaxation of rat smooth muscle from tail artery (EC(50)=10.8 nM) and contraction of that from ileum (EC(50)=645 nM), urinary bladder (EC(50)=1.1 uM) and uterus (EC(50)=1.2 uM). Binds to both bradykinin receptor B1 (BDKRB1) and B2 (BDKRB2). Apart from uterus smooth muscle, the effect via B2 is stronger. Functionally, [Hyp3,Thr6]-bradykinyl-Val,Asp: Induces relaxation of rat smooth muscle from tail artery (EC(50)=3.5 nM) and contraction of that from ileum (EC(50)=223 nM), urinary bladder (EC(50)=1.5 uM) and uterus (EC(50)=356 nM). Binds to both bradykinin receptor B1 (BDKRB1) and B2 (BDKRB2); the effects via B2 a stronger. This is [Thr6]-bradykinyl-Val,Asp from Agalychnis callidryas (Red-eyed tree frog).